A 434-amino-acid chain; its full sequence is ATP-dependent RNA helicase RhlB (434 aa).

Positions 9 to 37 (QKFADLGLEPQVLDGLNAKGFINCTPIQA) match the Q motif motif. Positions 40 to 219 (LPVLLAGQDI…FEHMQEPEHV (180 aa)) constitute a Helicase ATP-binding domain. 53–60 (AQTGTGKT) is a binding site for ATP. A DEAD box motif is present at residues 165 to 168 (DEAD). The region spanning 245-390 (ALLQTLIEEE…QSDYDTSALL (146 aa)) is the Helicase C-terminal domain. Residues 394 to 434 (PAPIRLQRRPPQNRRNGSNNGQRQSGNRKHSRPRPPRSPQA) are disordered. Residues 406–418 (NRRNGSNNGQRQS) show a composition bias toward low complexity. A compositionally biased stretch (basic residues) spans 419–428 (GNRKHSRPRP).

This sequence belongs to the DEAD box helicase family. RhlB subfamily. In terms of assembly, component of the RNA degradosome, which is a multiprotein complex involved in RNA processing and mRNA degradation.

The protein resides in the cytoplasm. The catalysed reaction is ATP + H2O = ADP + phosphate + H(+). In terms of biological role, DEAD-box RNA helicase involved in RNA degradation. Has RNA-dependent ATPase activity and unwinds double-stranded RNA. This chain is ATP-dependent RNA helicase RhlB, found in Aliivibrio salmonicida (strain LFI1238) (Vibrio salmonicida (strain LFI1238)).